The chain runs to 428 residues: Trigger factor (428 aa).

Residues 163–248 (GDIVDIDFEG…VNDVKVKELP (86 aa)) enclose the PPIase FKBP-type domain.

Belongs to the FKBP-type PPIase family. Tig subfamily.

Its subcellular location is the cytoplasm. It carries out the reaction [protein]-peptidylproline (omega=180) = [protein]-peptidylproline (omega=0). Involved in protein export. Acts as a chaperone by maintaining the newly synthesized protein in an open conformation. Functions as a peptidyl-prolyl cis-trans isomerase. The polypeptide is Trigger factor (Acetivibrio thermocellus (strain ATCC 27405 / DSM 1237 / JCM 9322 / NBRC 103400 / NCIMB 10682 / NRRL B-4536 / VPI 7372) (Clostridium thermocellum)).